We begin with the raw amino-acid sequence, 306 residues long: Follistatin-related protein 1 (306 aa).

The first 18 residues, 1–18, serve as a signal peptide directing secretion; sequence MWKRWLALSLVTIALVHG. The region spanning 28–51 is the Follistatin-like domain; it reads ICANVFCGAGRECAVTEKGEPTCL. Disulfide bonds link Cys29–Cys40, Cys34–Cys50, Cys52–Cys82, Cys56–Cys75, and Cys64–Cys96. Residues 46 to 98 enclose the Kazal-like domain; sequence GEPTCLCIEQCKPHKRPVCGSNGKTYLNHCELHRDACLTGSKIQVDYDGHCKE. N-linked (GlcNAc...) asparagine glycosylation occurs at Asn142. Positions 142-176 constitute an EF-hand 1 domain; that stretch reads NYSEILDKYFKSFDNGDSHLDSSEFLKFVEQNETA. The residue at position 163 (Ser163) is a Phosphoserine. N-linked (GlcNAc...) asparagine glycosylation is found at Asn173 and Asn178. The 36-residue stretch at 191–226 folds into the EF-hand 2 domain; that stretch reads LRSLCVDALIELSDENADWKLSFQEFLKCLNPSFNP. Positions 231 to 285 constitute a VWFC domain; the sequence is CALEDETYADGAETEVDCNRCVCSCGHWVCTAMTCDGKNQKGVQTHTEEEKTGYV.

Homodimer. Interacts with SCN10A. Interacts with DIP2A; DIP2A may act as a cell surface receptor for FSTL1. Interacts with BMP4. Interacts with CD14; this interaction promotes TL4-mediated signaling cascade. During central nervous system development, strongly expressed in the telencephalon, diencephalon, brainstem, limbic system and spinal cord. Widely expressed in all organs.

The protein resides in the secreted. Secreted glycoprotein that is involved in various physiological processes, such as angiogenesis, regulation of the immune response, cell proliferation and differentiation. Plays a role in the development of the central nervous system, skeletal system, lungs, and ureter. Promotes endothelial cell survival, migration and differentiation into network structures in an AKT-dependent manner. Also promotes survival of cardiac myocytes. Initiates various signaling cascades by activating different receptors on the cell surface such as DIP2A, TLR4 or BMP receptors. This is Follistatin-related protein 1 (Fstl1) from Mus musculus (Mouse).